Reading from the N-terminus, the 145-residue chain is Dihydrolipoyllysine-residue succinyltransferase component of 2-oxoglutarate dehydrogenase complex, mitochondrial (145 aa).

Residues 4–31 (ITVQTPAFAESVTEGDVRVEGGTPLFTL) form the Lipoyl-binding domain. Ser14 carries the post-translational modification Phosphoserine. Residues Lys36 and Lys66 each carry the N6-acetyllysine modification. Residues His119 and Asp123 contribute to the active site.

Belongs to the 2-oxoacid dehydrogenase family. As to quaternary structure, the 2-oxoglutarate dehydrogenase complex is composed of OGDH (2-oxoglutarate dehydrogenase; E1), DLST (dihydrolipoamide succinyltransferase; E2), DLD (dihydrolipoamide dehydrogenase; E3) and the assembly factor KGD4. It contains multiple copies of the three enzymatic components (E1, E2 and E3). In the nucleus, the 2-oxoglutarate dehydrogenase complex associates with KAT2A. Interacts with ABHD11; this interaction maintains the functional lipoylation of the 2-oxoglutarate dehydrogenase complex. The cofactor is (R)-lipoate.

The protein resides in the mitochondrion matrix. The protein localises to the nucleus. The enzyme catalyses N(6)-[(R)-dihydrolipoyl]-L-lysyl-[protein] + succinyl-CoA = N(6)-[(R)-S(8)-succinyldihydrolipoyl]-L-lysyl-[protein] + CoA. The protein operates within amino-acid degradation; L-lysine degradation via saccharopine pathway; glutaryl-CoA from L-lysine: step 6/6. Its pathway is carbohydrate metabolism; tricarboxylic acid cycle. In terms of biological role, dihydrolipoamide succinyltransferase (E2) component of the 2-oxoglutarate dehydrogenase complex. The 2-oxoglutarate dehydrogenase complex catalyzes the overall conversion of 2-oxoglutarate to succinyl-CoA and CO(2). The 2-oxoglutarate dehydrogenase complex is mainly active in the mitochondrion. A fraction of the 2-oxoglutarate dehydrogenase complex also localizes in the nucleus and is required for lysine succinylation of histones: associates with KAT2A on chromatin and provides succinyl-CoA to histone succinyltransferase KAT2A. The polypeptide is Dihydrolipoyllysine-residue succinyltransferase component of 2-oxoglutarate dehydrogenase complex, mitochondrial (Mesocricetus auratus (Golden hamster)).